The primary structure comprises 878 residues: Valine--tRNA ligase (878 aa).

A 'HIGH' region motif is present at residues Pro-45–His-55. The 'KMSKS' region motif lies at Lys-524–Ser-528. Residue Lys-527 participates in ATP binding. A coiled-coil region spans residues Pro-804 to Ile-871.

This sequence belongs to the class-I aminoacyl-tRNA synthetase family. ValS type 1 subfamily. As to quaternary structure, monomer.

The protein localises to the cytoplasm. It catalyses the reaction tRNA(Val) + L-valine + ATP = L-valyl-tRNA(Val) + AMP + diphosphate. Its function is as follows. Catalyzes the attachment of valine to tRNA(Val). As ValRS can inadvertently accommodate and process structurally similar amino acids such as threonine, to avoid such errors, it has a 'posttransfer' editing activity that hydrolyzes mischarged Thr-tRNA(Val) in a tRNA-dependent manner. The polypeptide is Valine--tRNA ligase (Carboxydothermus hydrogenoformans (strain ATCC BAA-161 / DSM 6008 / Z-2901)).